We begin with the raw amino-acid sequence, 389 residues long: Succinate--CoA ligase [ADP-forming] subunit beta (389 aa).

Residues 9–244 (KQLFADYGLP…ETQEDPREVE (236 aa)) enclose the ATP-grasp domain. ATP is bound by residues Lys-46, 53–55 (GRG), Glu-99, Gly-102, and Glu-107. Positions 199 and 213 each coordinate Mg(2+). Residues Asn-264 and 321–323 (GIV) each bind substrate.

Belongs to the succinate/malate CoA ligase beta subunit family. As to quaternary structure, heterotetramer of two alpha and two beta subunits. Mg(2+) serves as cofactor.

The catalysed reaction is succinate + ATP + CoA = succinyl-CoA + ADP + phosphate. It carries out the reaction GTP + succinate + CoA = succinyl-CoA + GDP + phosphate. Its pathway is carbohydrate metabolism; tricarboxylic acid cycle; succinate from succinyl-CoA (ligase route): step 1/1. Succinyl-CoA synthetase functions in the citric acid cycle (TCA), coupling the hydrolysis of succinyl-CoA to the synthesis of either ATP or GTP and thus represents the only step of substrate-level phosphorylation in the TCA. The beta subunit provides nucleotide specificity of the enzyme and binds the substrate succinate, while the binding sites for coenzyme A and phosphate are found in the alpha subunit. This chain is Succinate--CoA ligase [ADP-forming] subunit beta, found in Tolumonas auensis (strain DSM 9187 / NBRC 110442 / TA 4).